We begin with the raw amino-acid sequence, 259 residues long: Putative pyrophosphorylase ModD (259 aa).

Belongs to the NadC/ModD family.

The protein is Putative pyrophosphorylase ModD (modD) of Rhodobacter capsulatus (Rhodopseudomonas capsulata).